We begin with the raw amino-acid sequence, 206 residues long: Thiamine-phosphate synthase (206 aa).

4-amino-2-methyl-5-(diphosphooxymethyl)pyrimidine is bound by residues 33–37 (QMRFK) and N65. Positions 66 and 85 each coordinate Mg(2+). T104 lines the 4-amino-2-methyl-5-(diphosphooxymethyl)pyrimidine pocket. 130 to 132 (TAT) contributes to the 2-[(2R,5Z)-2-carboxy-4-methylthiazol-5(2H)-ylidene]ethyl phosphate binding site. Residue K133 coordinates 4-amino-2-methyl-5-(diphosphooxymethyl)pyrimidine. G166 is a binding site for 2-[(2R,5Z)-2-carboxy-4-methylthiazol-5(2H)-ylidene]ethyl phosphate.

The protein belongs to the thiamine-phosphate synthase family. Mg(2+) is required as a cofactor.

It carries out the reaction 2-[(2R,5Z)-2-carboxy-4-methylthiazol-5(2H)-ylidene]ethyl phosphate + 4-amino-2-methyl-5-(diphosphooxymethyl)pyrimidine + 2 H(+) = thiamine phosphate + CO2 + diphosphate. It catalyses the reaction 2-(2-carboxy-4-methylthiazol-5-yl)ethyl phosphate + 4-amino-2-methyl-5-(diphosphooxymethyl)pyrimidine + 2 H(+) = thiamine phosphate + CO2 + diphosphate. The catalysed reaction is 4-methyl-5-(2-phosphooxyethyl)-thiazole + 4-amino-2-methyl-5-(diphosphooxymethyl)pyrimidine + H(+) = thiamine phosphate + diphosphate. It participates in cofactor biosynthesis; thiamine diphosphate biosynthesis; thiamine phosphate from 4-amino-2-methyl-5-diphosphomethylpyrimidine and 4-methyl-5-(2-phosphoethyl)-thiazole: step 1/1. In terms of biological role, condenses 4-methyl-5-(beta-hydroxyethyl)thiazole monophosphate (THZ-P) and 2-methyl-4-amino-5-hydroxymethyl pyrimidine pyrophosphate (HMP-PP) to form thiamine monophosphate (TMP). This chain is Thiamine-phosphate synthase, found in Flavobacterium psychrophilum (strain ATCC 49511 / DSM 21280 / CIP 103535 / JIP02/86).